Reading from the N-terminus, the 38-residue chain is Photosystem II reaction center protein L (38 aa).

A helical transmembrane segment spans residues 17-37; it reads SLYWGLLLIFVLAVLFSNYFF.

It belongs to the PsbL family. As to quaternary structure, PSII is composed of 1 copy each of membrane proteins PsbA, PsbB, PsbC, PsbD, PsbE, PsbF, PsbH, PsbI, PsbJ, PsbK, PsbL, PsbM, PsbT, PsbX, PsbY, PsbZ, Psb30/Ycf12, at least 3 peripheral proteins of the oxygen-evolving complex and a large number of cofactors. It forms dimeric complexes.

Its subcellular location is the plastid. It localises to the chloroplast thylakoid membrane. Functionally, one of the components of the core complex of photosystem II (PSII). PSII is a light-driven water:plastoquinone oxidoreductase that uses light energy to abstract electrons from H(2)O, generating O(2) and a proton gradient subsequently used for ATP formation. It consists of a core antenna complex that captures photons, and an electron transfer chain that converts photonic excitation into a charge separation. This subunit is found at the monomer-monomer interface and is required for correct PSII assembly and/or dimerization. The sequence is that of Photosystem II reaction center protein L from Gnetum gnemon (Spanish joint-fir).